The sequence spans 505 residues: DNA repair protein RadA (505 aa).

The segment at 10 to 27 (CSACGADHAQWFGRCPKC) adopts a C4-type zinc-finger fold. 107–114 (GDPGIGKS) serves as a coordination point for ATP. The short motif at 281–285 (KNRFG) is the RadA KNRFG motif element. The interval 380–505 (DAYLSVAGGL…KIEEDLGKKD (126 aa)) is lon-protease-like. Residues 485-505 (NTTDQGNGSEAKIEEDLGKKD) form a disordered region. The span at 495–505 (AKIEEDLGKKD) shows a compositional bias: basic and acidic residues.

It belongs to the RecA family. RadA subfamily.

DNA-dependent ATPase involved in processing of recombination intermediates, plays a role in repairing DNA breaks. Stimulates the branch migration of RecA-mediated strand transfer reactions, allowing the 3' invading strand to extend heteroduplex DNA faster. Binds ssDNA in the presence of ADP but not other nucleotides, has ATPase activity that is stimulated by ssDNA and various branched DNA structures, but inhibited by SSB. Does not have RecA's homology-searching function. In Synechocystis sp. (strain ATCC 27184 / PCC 6803 / Kazusa), this protein is DNA repair protein RadA.